The primary structure comprises 1231 residues: ATP-dependent RNA helicase DHX30 (1231 aa).

The segment at 39–65 is disordered; it reads PDGLEGARQEDEEEQPPPPGAEEQSTA. DRBM domains follow at residues 80 to 148 and 292 to 359; these read PKNL…CQLF and PKNL…CQKL. A Helicase ATP-binding domain is found at 488-656; that stretch reads LSAIEQNPVV…FGGCPVVKVP (169 aa). 501 to 508 lines the ATP pocket; sequence GDTGCGKT. The DEAH box signature appears at 603–606; sequence DEVH. Residues 697–870 enclose the Helicase C-terminal domain; it reads LITDLVLQID…NLVVQAKIHM (174 aa).

This sequence belongs to the DEAD box helicase family. DEAH subfamily.

The protein resides in the cytoplasm. The protein localises to the mitochondrion. It is found in the mitochondrion matrix. Its subcellular location is the mitochondrion nucleoid. The catalysed reaction is ATP + H2O = ADP + phosphate + H(+). In terms of biological role, RNA-dependent helicase. Plays an important role in the assembly of the mitochondrial large ribosomal subunit. Required for optimal function of the zinc-finger antiviral protein ZC3HAV1. Associates with mitochondrial DNA. Involved in nervous system development and differentiation through its involvement in the up-regulation of a number of genes which are required for neurogenesis, including GSC, NCAM1, neurogenin, and NEUROD. This Gallus gallus (Chicken) protein is ATP-dependent RNA helicase DHX30 (DHX30).